Consider the following 335-residue polypeptide: Erlin-2-A (335 aa).

At 1–2 the chain is on the cytoplasmic side; that stretch reads MS. The chain crosses the membrane as a helical span at residues 3 to 23; that stretch reads HAGAIVGLGVALIAAALFSAI. Residues 24–335 are Lumenal-facing; it reads HKIEEGHVGV…GLDEAASAEE (312 aa). Asparagine 106 carries an N-linked (GlcNAc...) asparagine glycan.

It belongs to the band 7/mec-2 family.

The protein resides in the endoplasmic reticulum membrane. Functionally, mediates the endoplasmic reticulum-associated degradation (ERAD) of inositol 1,4,5-trisphosphate receptors (IP3Rs). Promotes sterol-accelerated ERAD of HMGCR. Involved in regulation of cellular cholesterol homeostasis by regulation the SREBP signaling pathway. This Xenopus laevis (African clawed frog) protein is Erlin-2-A (erlin2-a).